The chain runs to 171 residues: Tubulin polymerization-promoting protein family member 2 (171 aa).

The tract at residues 120–171 (LTDTSKYTGTHKERFDESGKGKGIAGREDVTDNSGYVSGYKGAGTYDKKGSN) is disordered. The span at 129 to 149 (THKERFDESGKGKGIAGREDV) shows a compositional bias: basic and acidic residues.

This sequence belongs to the TPPP family.

It localises to the cytoplasm. The protein resides in the cytosol. It is found in the cell projection. The protein localises to the cilium. Its subcellular location is the flagellum. Probable regulator of microtubule dynamics required for sperm motility. In contrast to other members of the family, has no microtubule bundling activity. The sequence is that of Tubulin polymerization-promoting protein family member 2 from Bos taurus (Bovine).